A 548-amino-acid polypeptide reads, in one-letter code: Chaperonin GroEL (548 aa).

ATP contacts are provided by residues Thr30–Pro33, Lys51, Asp87–Thr91, Gly415, Asn479–Ala481, and Asp495.

This sequence belongs to the chaperonin (HSP60) family. As to quaternary structure, forms a cylinder of 14 subunits composed of two heptameric rings stacked back-to-back. Interacts with the co-chaperonin GroES.

It localises to the cytoplasm. It catalyses the reaction ATP + H2O + a folded polypeptide = ADP + phosphate + an unfolded polypeptide.. Functionally, together with its co-chaperonin GroES, plays an essential role in assisting protein folding. The GroEL-GroES system forms a nano-cage that allows encapsulation of the non-native substrate proteins and provides a physical environment optimized to promote and accelerate protein folding. In Klebsiella pneumoniae subsp. pneumoniae (strain ATCC 700721 / MGH 78578), this protein is Chaperonin GroEL.